The following is a 91-amino-acid chain: Small ribosomal subunit protein uS19 (91 aa).

The protein belongs to the universal ribosomal protein uS19 family.

Functionally, protein S19 forms a complex with S13 that binds strongly to the 16S ribosomal RNA. The polypeptide is Small ribosomal subunit protein uS19 (Prochlorococcus marinus subsp. pastoris (strain CCMP1986 / NIES-2087 / MED4)).